The primary structure comprises 55 residues: Ribosome biogenesis protein Nop10 (55 aa).

This sequence belongs to the NOP10 family.

Functionally, involved in ribosome biogenesis; more specifically in 18S rRNA pseudouridylation and in cleavage of pre-rRNA. This is Ribosome biogenesis protein Nop10 from Methanosphaera stadtmanae (strain ATCC 43021 / DSM 3091 / JCM 11832 / MCB-3).